We begin with the raw amino-acid sequence, 341 residues long: MPSIRLADLAQQLDAELHGDGDIVITGVASMQSAQTGHITFMVNPKYREHLGLCQASAVVMTQDDLPFAKSAALVVKNPYLTYARMAQILDTTPQPAQNIAPSAVIDATAKLGNNVSIGANAVIESGVELGDNVIIGAGCFVGKNSKIGAGSRLWANVTIYHEIQIGQNCLIQSGTVVGADGFGYANDRGNWVKIPQIGRVIIGDRVEIGACTTIDRGALDDTVIGNGVIIDNQCQIAHNVVIGDNTAVAGGVIMAGSLKIGRYCMIGGASVINGHMEICDKVTVTGMGMVMRPITEPGVYSSGIPLQPNKVWRKTAALVMNIDDMSKRLKSLERKVNQQD.

His-239 functions as the Proton acceptor in the catalytic mechanism.

It belongs to the transferase hexapeptide repeat family. LpxD subfamily. As to quaternary structure, homotrimer.

It carries out the reaction a UDP-3-O-[(3R)-3-hydroxyacyl]-alpha-D-glucosamine + a (3R)-hydroxyacyl-[ACP] = a UDP-2-N,3-O-bis[(3R)-3-hydroxyacyl]-alpha-D-glucosamine + holo-[ACP] + H(+). It catalyses the reaction UDP-3-O-[(3R)-3-hydroxytetradecanoyl]-alpha-D-glucosamine + (3R)-hydroxytetradecanoyl-[ACP] = UDP-2-N,3-O-bis[(3R)-3-hydroxytetradecanoyl]-alpha-D-glucosamine + holo-[ACP] + H(+). The protein operates within glycolipid biosynthesis; lipid IV(A) biosynthesis; lipid IV(A) from (3R)-3-hydroxytetradecanoyl-[acyl-carrier-protein] and UDP-N-acetyl-alpha-D-glucosamine: step 3/6. Its function is as follows. Catalyzes the N-acylation of UDP-3-O-(hydroxytetradecanoyl)glucosamine using 3-hydroxytetradecanoyl-ACP as the acyl donor. Is involved in the biosynthesis of lipid A, a phosphorylated glycolipid that anchors the lipopolysaccharide to the outer membrane of the cell. The sequence is that of UDP-3-O-(3-hydroxymyristoyl)glucosamine N-acyltransferase from Escherichia coli O157:H7.